The following is a 361-amino-acid chain: MTVRVIIAGGGTGGHLFPGVAIAEELLRRDRENRVLFVGTKRGIEKKVLKDLGFRLKLLNVEGIKGRGVMRSSLALLKLPGSLMQSMKIIRDFRPDVVIGVGGYASGPAVMAAHLMGIKTAIAEQNSIPGLTNRILGRFVDRVFLSFSDGGKWFSAKKAAVSGNPIRAAFFNGKPVLEKTGDQFSLLVFGGSQGAHAINSAFQDALPFLQLLKGCLRIVHQTGERDCESMAAAYSAQGFSARVVPFIRDMAAAYEAADLLICRAGATSIAEITAIGKAAILIPFPYAIGDHQTENAKVLLKAGAAVMIPEKDLTGKKLADEIQNFYSHPSLLKDMEAKAASLGNIYAASDIVDSCMAMIRL.

UDP-N-acetyl-alpha-D-glucosamine is bound by residues 12–14, Asn126, Arg167, Ser192, Ile247, and Gln292; that span reads TGG.

It belongs to the glycosyltransferase 28 family. MurG subfamily.

It localises to the cell inner membrane. It catalyses the reaction di-trans,octa-cis-undecaprenyl diphospho-N-acetyl-alpha-D-muramoyl-L-alanyl-D-glutamyl-meso-2,6-diaminopimeloyl-D-alanyl-D-alanine + UDP-N-acetyl-alpha-D-glucosamine = di-trans,octa-cis-undecaprenyl diphospho-[N-acetyl-alpha-D-glucosaminyl-(1-&gt;4)]-N-acetyl-alpha-D-muramoyl-L-alanyl-D-glutamyl-meso-2,6-diaminopimeloyl-D-alanyl-D-alanine + UDP + H(+). The protein operates within cell wall biogenesis; peptidoglycan biosynthesis. Its function is as follows. Cell wall formation. Catalyzes the transfer of a GlcNAc subunit on undecaprenyl-pyrophosphoryl-MurNAc-pentapeptide (lipid intermediate I) to form undecaprenyl-pyrophosphoryl-MurNAc-(pentapeptide)GlcNAc (lipid intermediate II). The sequence is that of UDP-N-acetylglucosamine--N-acetylmuramyl-(pentapeptide) pyrophosphoryl-undecaprenol N-acetylglucosamine transferase from Syntrophus aciditrophicus (strain SB).